Consider the following 38-residue polypeptide: Photosystem II reaction center protein L (38 aa).

A helical membrane pass occupies residues 17 to 37 (SLYWGLLLIFVLAVLFSNYFF).

The protein belongs to the PsbL family. In terms of assembly, PSII is composed of 1 copy each of membrane proteins PsbA, PsbB, PsbC, PsbD, PsbE, PsbF, PsbH, PsbI, PsbJ, PsbK, PsbL, PsbM, PsbT, PsbX, PsbY, PsbZ, Psb30/Ycf12, at least 3 peripheral proteins of the oxygen-evolving complex and a large number of cofactors. It forms dimeric complexes.

The protein localises to the plastid. It is found in the chloroplast thylakoid membrane. In terms of biological role, one of the components of the core complex of photosystem II (PSII). PSII is a light-driven water:plastoquinone oxidoreductase that uses light energy to abstract electrons from H(2)O, generating O(2) and a proton gradient subsequently used for ATP formation. It consists of a core antenna complex that captures photons, and an electron transfer chain that converts photonic excitation into a charge separation. This subunit is found at the monomer-monomer interface and is required for correct PSII assembly and/or dimerization. This Ananas comosus (Pineapple) protein is Photosystem II reaction center protein L.